Here is a 677-residue protein sequence, read N- to C-terminus: Pro-neuregulin-1, membrane-bound isoform (677 aa).

Positions 1-12 (MAEKKKVKEGKG) are enriched in basic and acidic residues. Disordered stretches follow at residues 1–43 (MAEK…KEIK) and 78–106 (GAKN…ISKA). Residues 1 to 260 (MAEKKKVKEG…MEAEELYQKR (260 aa)) lie on the Extracellular side of the membrane. Over residues 13-24 (RKGKGKKDRKGK) the composition is skewed to basic residues. Positions 37–132 (PKLKEIKTQS…GNDTVTVNVT (96 aa)) constitute an Ig-like C2-type domain. The cysteines at positions 57 and 116 are disulfide-linked. Over residues 78–91 (GAKNKPDSKPEHIK) the composition is skewed to basic and acidic residues. N-linked (GlcNAc...) asparagine glycans are attached at residues asparagine 124 and asparagine 130. Residues 188–232 (HLIKCSDKEKTYCVNGGECYVLNGITSSNQFMCKCKPGFTGARCT) form the EGF-like domain. Cystine bridges form between cysteine 192-cysteine 206, cysteine 200-cysteine 220, and cysteine 222-cysteine 231. The helical transmembrane segment at 261 to 280 (VLTITGICIDLLVVGDMCVV) threads the bilayer. Over 281–677 (DAYCKTKKQR…RKMTCKTLFI (397 aa)) the chain is Cytoplasmic. Positions 294-315 (NDRLRQSLRERNKNITNKDNRP) are enriched in basic and acidic residues. Disordered stretches follow at residues 294-326 (NDRL…PRKN), 350-375 (ETSF…PSHS), 397-418 (SVEN…GIGG), 457-479 (VEFK…ESSL), and 503-617 (PPRL…FLSI). Over residues 351-375 (TSFSTSHYTSTTHHSTTVTQTPSHS) the composition is skewed to low complexity. Positions 397–407 (SVENSRHTSPT) are enriched in polar residues. Residues 505-515 (RLREKRYDRKT) are compositionally biased toward basic and acidic residues. The span at 568 to 578 (VNSRRQKRTKP) shows a compositional bias: basic residues. Low complexity predominate over residues 591 to 600 (DSSSESSTSE).

The protein belongs to the neuregulin family. Proteolytic cleavage close to the plasma membrane on the external face leads to the release of the soluble growth factor form. In terms of processing, extensive glycosylation precedes the proteolytic cleavage. Isoform alpha1 is expressed in brain and muscle. Isoform CRD is expressed in brain and spinal cord, but at very low level in muscle.

It is found in the cell membrane. Its subcellular location is the secreted. Direct ligand for the ERBB tyrosine kinase receptors. Induces expression of acetylcholine receptor in synaptic nuclei. The protein is Pro-neuregulin-1, membrane-bound isoform (nrg1) of Xenopus laevis (African clawed frog).